The primary structure comprises 671 residues: MADKKRYEELINILDQYSYDYYVIDNPTVEDAEYDQKMQELLKIEEAHPEWVTPESPSKRVGGEVLEGFKKVAHDTPMLSLANAFNQEDLADFDRRIRDKVGDDIAYMCELKIDGLAVSLQYENGKYKQGATRGDGTIGEDITANLRTIRSIPMKLQKDYSIEVRGEAFMPKRSFQKLNEIREEEGQMLFANPRNAAAGSLRQLDTKIAASRNLDIFLYAVADFGEMGVETHSAGLDMLETLGLKVNKERRLCNSLEEVYAYIEEWTEKRAGLAYDIDGIVLKLNNLEQQRQMGTTVKSPRWSIAYKFPAEEVPTKLLDIELNVGRTGVITPTAVLEPVRVAGTTVSRASLHNEDLITEKDIRIGDTVLIKKAGDIIPEVIKSITEERSGSEEPFHMPKNCPTCDSELVRLEEEVALRCINPKCPAQIKEGLIHFVSRNAMNIDGLGEKVIIQLFSQHLIKDVADLFFLSKEKLLELERMGEKSVTNLLASIEASKQNSLEKLLFGLGIRHVGAKAAKSLAIHFDTMDNLKVADKETLTSINDIGEKMADSIVTYFANEEVHDLLEELKRAGVNMTYTGPKLEDMSEEELVFAGKTVVLTGKLEKLTRNDAKALIESLGGNVSGSVSKKTDVVVAGSDAGSKLAKAEELAIPIWSEEDLIEYLPDEGGLNE.

NAD(+) contacts are provided by residues 31-35, 80-81, and E110; these read DAEYD and SL. Catalysis depends on K112, which acts as the N6-AMP-lysine intermediate. NAD(+) is bound by residues R133, E167, K283, and K307. Zn(2+) contacts are provided by C401, C404, C419, and C424. The region spanning 587-671 is the BRCT domain; that stretch reads EEELVFAGKT…YLPDEGGLNE (85 aa).

Belongs to the NAD-dependent DNA ligase family. LigA subfamily. Requires Mg(2+) as cofactor. The cofactor is Mn(2+).

The enzyme catalyses NAD(+) + (deoxyribonucleotide)n-3'-hydroxyl + 5'-phospho-(deoxyribonucleotide)m = (deoxyribonucleotide)n+m + AMP + beta-nicotinamide D-nucleotide.. Functionally, DNA ligase that catalyzes the formation of phosphodiester linkages between 5'-phosphoryl and 3'-hydroxyl groups in double-stranded DNA using NAD as a coenzyme and as the energy source for the reaction. It is essential for DNA replication and repair of damaged DNA. The polypeptide is DNA ligase (Listeria monocytogenes serotype 4a (strain HCC23)).